The sequence spans 362 residues: uncharacterized protein (362 aa).

This is an uncharacterized protein from Caenorhabditis elegans.